Reading from the N-terminus, the 362-residue chain is Chemerin-like receptor 1 (362 aa).

Residues 1-37 (MEAEDYNASYEDYPDDVDPIVVLEELSPLEGRVVRIL) lie on the Extracellular side of the membrane. A glycan (N-linked (GlcNAc...) asparagine) is linked at Asn-7. A helical membrane pass occupies residues 38–58 (LVAVYSVICLLGILGNGLVIV). Residues 59–70 (MITCKMKRTVNT) are Cytoplasmic-facing. The helical transmembrane segment at 71-91 (VWFLNLAVADFLFNVFLPVHI) threads the bilayer. Topologically, residues 92-108 (AYAALDYHWVFGTAMCK) are extracellular. Cysteines 107 and 184 form a disulfide. The helical transmembrane segment at 109–129 (ISNFLLIHNMFTSVFLLTVIS) threads the bilayer. At 130–151 (FDRCVSVLLPVWSQNHRSVRLA) the chain is on the cytoplasmic side. The chain crosses the membrane as a helical span at residues 152-172 (YTACLVIWVLAFFLSSPSLVF). The Extracellular segment spans residues 173–219 (RDTARLHGKISCFNNFSLSAAVSSPWPAHPQVDPVGSGRHKVVTITR). Asn-187 is a glycosylation site (N-linked (GlcNAc...) asparagine). Residues 220–240 (FLCGFLVPGLITTACYLTIVY) form a helical membrane-spanning segment. The Cytoplasmic portion of the chain corresponds to 241–255 (KLQRSRLAKTKKPFK). A helical membrane pass occupies residues 256-276 (IILTIIVTFFLCWCPYHAFYL). The Extracellular segment spans residues 277–281 (LELRR). The chain crosses the membrane as a helical span at residues 282–302 (GSVPPSVFSLGVPLATAIAIA). Residues 303 to 362 (NSCMNPILYVFMGQDFKKFRVALFSRLVNALSEDTGHSSYPSHRSFTKMSSMNERETGML) are Cytoplasmic-facing. Position 334 is a phosphoserine (Ser-334). The disordered stretch occupies residues 336–362 (DTGHSSYPSHRSFTKMSSMNERETGML). Residue Thr-337 is modified to Phosphothreonine. Positions 339 to 354 (HSSYPSHRSFTKMSSM) are enriched in polar residues. 3 positions are modified to phosphoserine: Ser-344, Ser-347, and Ser-353.

It belongs to the chemokine-like receptor (CMKLR) family. In terms of tissue distribution, widely expressed in several tissues including adipose, muscle, liver and brain.

Its subcellular location is the cell membrane. Receptor for the chemoattractant adipokine chemerin/RARRES2 and for the omega-3 fatty acid derived molecule resolvin E1. Interaction with RARRES2 initiates activation of G proteins G(i)/G(o) and beta-arrestin pathways inducing cellular responses via second messenger pathways such as intracellular calcium mobilization, phosphorylation of MAP kinases MAPK1/MAPK3 (ERK1/2), TYRO3, MAPK14/P38MAPK and PI3K leading to multifunctional effects, like, reduction of immune responses, enhancing of adipogenesis and angionesis. Resolvin E1 down-regulates cytokine production in macrophages by reducing the activation of MAPK1/3 (ERK1/2) and NF-kappa-B. Positively regulates adipogenesis and adipocyte metabolism. In Bos taurus (Bovine), this protein is Chemerin-like receptor 1 (CMLKR1).